We begin with the raw amino-acid sequence, 273 residues long: Phycocyanobilin lyase subunit alpha (273 aa).

This sequence belongs to the CpcE/RpcE/PecE family. CpcE and CpcF associate to form a lyase.

In terms of biological role, required for the chromophorylation of the cpcA gene product. This is Phycocyanobilin lyase subunit alpha (cpcE) from Synechococcus elongatus (strain ATCC 33912 / PCC 7942 / FACHB-805) (Anacystis nidulans R2).